The following is a 217-amino-acid chain: GSWLVMRLMEPGYMVRATVRDPENLKKVSPLLELPGAKSKLSIWKADLGEEGSFDEAIKGCTGVFHVATPMDFESKDPENEMIKPTIKGVLDIMKACLKAKTVRRLIYTSSAGTLNVTEDQKPLWDESCWSDVEFCRRVKMTGWMYFVSKTLAEQEAWKFAKEHKMDVITIIPPLVVGPFLIPTMPPSLITALSPITGNEAHYSIIKQGQYVHLDDL.

Lys-27 and Tyr-146 together coordinate NADP(+).

Belongs to the NAD(P)-dependent epimerase/dehydratase family. Dihydroflavonol-4-reductase subfamily.

The enzyme catalyses a (2R,3S,4S)-leucoanthocyanidin + NADP(+) = a (2R,3R)-dihydroflavonol + NADPH + H(+). It catalyses the reaction (2S)-flavan-4-ol + NADP(+) = (2S)-flavanone + NADPH + H(+). It participates in pigment biosynthesis; anthocyanin biosynthesis. In terms of biological role, bifunctional enzyme involved in flavonoid metabolism. The chain is Dihydroflavonol 4-reductase (DFR1) from Medicago sativa (Alfalfa).